The primary structure comprises 339 residues: tRNA-dihydrouridine(20/20a) synthase (339 aa).

FMN-binding positions include 26–28 (PML) and Gln78. Cys108 functions as the Proton donor in the catalytic mechanism. Residues Lys147, His180, 220–222 (NGG), and 242–243 (GR) each bind FMN.

It belongs to the Dus family. DusA subfamily. Requires FMN as cofactor.

The catalysed reaction is 5,6-dihydrouridine(20) in tRNA + NADP(+) = uridine(20) in tRNA + NADPH + H(+). The enzyme catalyses 5,6-dihydrouridine(20) in tRNA + NAD(+) = uridine(20) in tRNA + NADH + H(+). It catalyses the reaction 5,6-dihydrouridine(20a) in tRNA + NADP(+) = uridine(20a) in tRNA + NADPH + H(+). It carries out the reaction 5,6-dihydrouridine(20a) in tRNA + NAD(+) = uridine(20a) in tRNA + NADH + H(+). Its function is as follows. Catalyzes the synthesis of 5,6-dihydrouridine (D), a modified base found in the D-loop of most tRNAs, via the reduction of the C5-C6 double bond in target uridines. Specifically modifies U20 and U20a in tRNAs. The polypeptide is tRNA-dihydrouridine(20/20a) synthase (Shigella flexneri).